The primary structure comprises 99 residues: MNPANYLILSALLFTIGTVGVLVRRNAIVVFMSVELMLNAVNLTLVTFSRIHGTLDGQIMAFFVMVVAAAEVVIGLAIILSIFRTRRSASVDDVNLLKY.

The next 3 membrane-spanning stretches (helical) occupy residues 3–23 (PANYLILSALLFTIGTVGVLV), 28–48 (IVVFMSVELMLNAVNLTLVTF), and 59–79 (IMAFFVMVVAAAEVVIGLAII).

The protein belongs to the complex I subunit 4L family. In terms of assembly, NDH-1 is composed of 14 different subunits. Subunits NuoA, H, J, K, L, M, N constitute the membrane sector of the complex.

Its subcellular location is the cell membrane. It carries out the reaction a quinone + NADH + 5 H(+)(in) = a quinol + NAD(+) + 4 H(+)(out). NDH-1 shuttles electrons from NADH, via FMN and iron-sulfur (Fe-S) centers, to quinones in the respiratory chain. The immediate electron acceptor for the enzyme in this species is believed to be a menaquinone. Couples the redox reaction to proton translocation (for every two electrons transferred, four hydrogen ions are translocated across the cytoplasmic membrane), and thus conserves the redox energy in a proton gradient. This chain is NADH-quinone oxidoreductase subunit K, found in Frankia casuarinae (strain DSM 45818 / CECT 9043 / HFP020203 / CcI3).